A 406-amino-acid chain; its full sequence is Putative gustatory receptor 59f (406 aa).

The Cytoplasmic segment spans residues 1-36 (MRSSATKGAKLKNSPRERLSSFNPQYAERYKELYRT). A helical membrane pass occupies residues 37 to 57 (LFWLLLISVLANTAPITILPG). At 58 to 69 (CPNRFYRLVHLS) the chain is on the extracellular side. A helical membrane pass occupies residues 70 to 90 (WMILWYGLFVLGSYWEFVLVT). The Cytoplasmic portion of the chain corresponds to 91-99 (TQRVSLDRY). A helical transmembrane segment spans residues 100–120 (LNAIESAIYVVHIFSIMLLTW). At 121-154 (QCRNWAPKLMTNIVTSDLNRAYTIDCNRTKRFIR) the chain is on the extracellular side. N-linked (GlcNAc...) asparagine glycosylation occurs at asparagine 147. Residues 155-175 (LQLFLVGIFACLAIFFNIWTH) form a helical membrane-spanning segment. The Cytoplasmic segment spans residues 176-189 (KFVVYRSILSINSY). Residues 190–210 (VMPNIISSISFAQYYLLLQGI) form a helical membrane-spanning segment. At 211-259 (AWRQRRLTEGLERELTHLHSPRISEVQKIRMHHANLIDFTKAVNRTFQY) the chain is on the extracellular side. Asparagine 254 carries N-linked (GlcNAc...) asparagine glycosylation. Residues 260–280 (SILLLFVGCFLNFNLVLFLVY) traverse the membrane as a helical segment. The Cytoplasmic portion of the chain corresponds to 281 to 364 (QGIENPSMAD…RQHVVCGVIN (84 aa)). A helical transmembrane segment spans residues 365 to 385 (LDLKFLTTLLVASADFFIFLL). Over 386–406 (QYDVTYEALSKSVQGNVTRYK) the chain is Extracellular. Residue asparagine 401 is glycosylated (N-linked (GlcNAc...) asparagine).

This sequence belongs to the insect chemoreceptor superfamily. Gustatory receptor (GR) family. Gr10a subfamily. As to expression, expressed in the adult abdomen and wing. In larvae, is expressed in neurons of the terminal external chemosensory organ.

Its subcellular location is the cell membrane. Functionally, probable gustatory receptor which mediates acceptance or avoidance behavior, depending on its substrates. This Drosophila melanogaster (Fruit fly) protein is Putative gustatory receptor 59f (Gr59f).